The sequence spans 344 residues: Protein RecA (344 aa).

Position 65-72 (65-72 (GPESSGKT)) interacts with ATP.

It belongs to the RecA family.

It localises to the cytoplasm. Its function is as follows. Can catalyze the hydrolysis of ATP in the presence of single-stranded DNA, the ATP-dependent uptake of single-stranded DNA by duplex DNA, and the ATP-dependent hybridization of homologous single-stranded DNAs. It interacts with LexA causing its activation and leading to its autocatalytic cleavage. The sequence is that of Protein RecA from Campylobacter lari.